The primary structure comprises 330 residues: tRNA U34 carboxymethyltransferase (330 aa).

Carboxy-S-adenosyl-L-methionine contacts are provided by residues K91, W105, K110, G130, 152–154 (DPS), 181–182 (IE), M196, Y200, and R315.

It belongs to the class I-like SAM-binding methyltransferase superfamily. CmoB family. In terms of assembly, homotetramer.

The catalysed reaction is carboxy-S-adenosyl-L-methionine + 5-hydroxyuridine(34) in tRNA = 5-carboxymethoxyuridine(34) in tRNA + S-adenosyl-L-homocysteine + H(+). In terms of biological role, catalyzes carboxymethyl transfer from carboxy-S-adenosyl-L-methionine (Cx-SAM) to 5-hydroxyuridine (ho5U) to form 5-carboxymethoxyuridine (cmo5U) at position 34 in tRNAs. This chain is tRNA U34 carboxymethyltransferase, found in Shewanella sp. (strain ANA-3).